Here is a 232-residue protein sequence, read N- to C-terminus: Ribosomal RNA small subunit methyltransferase G (232 aa).

S-adenosyl-L-methionine contacts are provided by residues Gly93, Leu98, 144 to 145, and Arg163; that span reads VE.

It belongs to the methyltransferase superfamily. RNA methyltransferase RsmG family.

The protein localises to the cytoplasm. The catalysed reaction is guanosine(527) in 16S rRNA + S-adenosyl-L-methionine = N(7)-methylguanosine(527) in 16S rRNA + S-adenosyl-L-homocysteine. Functionally, specifically methylates the N7 position of guanine in position 527 of 16S rRNA. The chain is Ribosomal RNA small subunit methyltransferase G from Burkholderia pseudomallei (strain 1710b).